The primary structure comprises 404 residues: L-cysteine:1D-myo-inositol 2-amino-2-deoxy-alpha-D-glucopyranoside ligase 1 (404 aa).

Cysteine 47 provides a ligand contact to Zn(2+). L-cysteinyl-5'-AMP is bound by residues cysteine 47–threonine 50, threonine 62, and asparagine 85–threonine 87. Residues isoleucine 49 to histidine 59 carry the 'HIGH' region motif. Residues glutamate 188–proline 193 carry the 'ERGGDP' region motif. L-cysteinyl-5'-AMP is bound at residue tryptophan 228. Cysteine 232 provides a ligand contact to Zn(2+). Glycine 250–aspartate 252 provides a ligand contact to L-cysteinyl-5'-AMP. Zn(2+) is bound at residue histidine 257. Isoleucine 284 lines the L-cysteinyl-5'-AMP pocket. The 'KMSKS' region signature appears at lysine 290 to serine 294.

It belongs to the class-I aminoacyl-tRNA synthetase family. MshC subfamily. Monomer. The cofactor is Zn(2+).

The enzyme catalyses 1D-myo-inositol 2-amino-2-deoxy-alpha-D-glucopyranoside + L-cysteine + ATP = 1D-myo-inositol 2-(L-cysteinylamino)-2-deoxy-alpha-D-glucopyranoside + AMP + diphosphate + H(+). Its function is as follows. Catalyzes the ATP-dependent condensation of GlcN-Ins and L-cysteine to form L-Cys-GlcN-Ins. The chain is L-cysteine:1D-myo-inositol 2-amino-2-deoxy-alpha-D-glucopyranoside ligase 1 from Corynebacterium jeikeium (strain K411).